The primary structure comprises 556 residues: Potassium-transporting ATPase potassium-binding subunit (556 aa).

10 helical membrane-spanning segments follow: residues 1 to 21 (MTWI…GIAQ), 60 to 80 (SYAR…YALQ), 130 to 150 (GLCV…VALI), 173 to 193 (LRIL…GGAV), 245 to 265 (PQPW…FSLP), 281 to 301 (ILAA…AAEF), 374 to 394 (GLYG…LLVG), 416 to 436 (ILVM…VPGL), 482 to 502 (AALG…ILAL), and 529 to 549 (LIVF…LTLG).

Belongs to the KdpA family. The system is composed of three essential subunits: KdpA, KdpB and KdpC.

The protein resides in the cell membrane. Functionally, part of the high-affinity ATP-driven potassium transport (or Kdp) system, which catalyzes the hydrolysis of ATP coupled with the electrogenic transport of potassium into the cytoplasm. This subunit binds the extracellular potassium ions and delivers the ions to the membrane domain of KdpB through an intramembrane tunnel. In Cutibacterium acnes (strain DSM 16379 / KPA171202) (Propionibacterium acnes), this protein is Potassium-transporting ATPase potassium-binding subunit.